Consider the following 398-residue polypeptide: Bifunctional enzyme IspD/IspF (398 aa).

Positions 1-234 are 2-C-methyl-D-erythritol 4-phosphate cytidylyltransferase; it reads MTNSPRTAAI…SRLMAALGDI (234 aa). Residues 235–398 form a 2-C-methyl-D-erythritol 2,4-cyclodiphosphate synthase region; it reads RTGTGYDVHA…LPWGADGLAG (164 aa). The a divalent metal cation site is built by aspartate 241 and histidine 243. 4-CDP-2-C-methyl-D-erythritol 2-phosphate is bound by residues 241 to 243 and 267 to 268; these read DVH and HS. Histidine 275 contacts a divalent metal cation. Residues 289–291, 365–368, phenylalanine 372, and arginine 375 contribute to the 4-CDP-2-C-methyl-D-erythritol 2-phosphate site; these read DIG and TTSE.

In the N-terminal section; belongs to the IspD/TarI cytidylyltransferase family. IspD subfamily. The protein in the C-terminal section; belongs to the IspF family. The cofactor is a divalent metal cation.

The enzyme catalyses 2-C-methyl-D-erythritol 4-phosphate + CTP + H(+) = 4-CDP-2-C-methyl-D-erythritol + diphosphate. It catalyses the reaction 4-CDP-2-C-methyl-D-erythritol 2-phosphate = 2-C-methyl-D-erythritol 2,4-cyclic diphosphate + CMP. The protein operates within isoprenoid biosynthesis; isopentenyl diphosphate biosynthesis via DXP pathway; isopentenyl diphosphate from 1-deoxy-D-xylulose 5-phosphate: step 2/6. It participates in isoprenoid biosynthesis; isopentenyl diphosphate biosynthesis via DXP pathway; isopentenyl diphosphate from 1-deoxy-D-xylulose 5-phosphate: step 4/6. In terms of biological role, bifunctional enzyme that catalyzes the formation of 4-diphosphocytidyl-2-C-methyl-D-erythritol from CTP and 2-C-methyl-D-erythritol 4-phosphate (MEP) (IspD), and catalyzes the conversion of 4-diphosphocytidyl-2-C-methyl-D-erythritol 2-phosphate (CDP-ME2P) to 2-C-methyl-D-erythritol 2,4-cyclodiphosphate (ME-CPP) with a corresponding release of cytidine 5-monophosphate (CMP) (IspF). This is Bifunctional enzyme IspD/IspF from Rhodopseudomonas palustris (strain ATCC BAA-98 / CGA009).